Reading from the N-terminus, the 271-residue chain is Formamidopyrimidine-DNA glycosylase (271 aa).

Catalysis depends on P2, which acts as the Schiff-base intermediate with DNA. Catalysis depends on E3, which acts as the Proton donor. K57 acts as the Proton donor; for beta-elimination activity in catalysis. Residues H90, R109, and K151 each coordinate DNA. The segment at 236–270 (HVYGRGGETCTQCGNLLSEIRLGQRTTVFCGICQT) adopts an FPG-type zinc-finger fold. The active-site Proton donor; for delta-elimination activity is R260.

Belongs to the FPG family. In terms of assembly, monomer. It depends on Zn(2+) as a cofactor.

The catalysed reaction is Hydrolysis of DNA containing ring-opened 7-methylguanine residues, releasing 2,6-diamino-4-hydroxy-5-(N-methyl)formamidopyrimidine.. It catalyses the reaction 2'-deoxyribonucleotide-(2'-deoxyribose 5'-phosphate)-2'-deoxyribonucleotide-DNA = a 3'-end 2'-deoxyribonucleotide-(2,3-dehydro-2,3-deoxyribose 5'-phosphate)-DNA + a 5'-end 5'-phospho-2'-deoxyribonucleoside-DNA + H(+). In terms of biological role, involved in base excision repair of DNA damaged by oxidation or by mutagenic agents. Acts as a DNA glycosylase that recognizes and removes damaged bases. Has a preference for oxidized purines, such as 7,8-dihydro-8-oxoguanine (8-oxoG). Has AP (apurinic/apyrimidinic) lyase activity and introduces nicks in the DNA strand. Cleaves the DNA backbone by beta-delta elimination to generate a single-strand break at the site of the removed base with both 3'- and 5'-phosphates. The protein is Formamidopyrimidine-DNA glycosylase of Shewanella sp. (strain MR-7).